Consider the following 125-residue polypeptide: Probable 4-amino-4-deoxy-L-arabinose-phosphoundecaprenol flippase subunit ArnF (125 aa).

Residues 1-2 (MG) lie on the Cytoplasmic side of the membrane. A helical transmembrane segment spans residues 3–23 (VMWGLISVAIASLAQLSLGFA). Residues 24 to 33 (MMRLPSIAHP) lie on the Periplasmic side of the membrane. A helical membrane pass occupies residues 34–54 (LAFISGLGAFNAATLALFAGL). At 55 to 76 (AGYLVSVFCWQKTLHTLALSKA) the chain is on the cytoplasmic side. A helical transmembrane segment spans residues 77–97 (YALLSLSYVLVWVASMLLPGL). Over 98–100 (QGA) the chain is Periplasmic. The helical transmembrane segment at 101-121 (FSLKAMLGVLCIMAGVMLIFL) threads the bilayer. Residues 122–125 (PARS) lie on the Cytoplasmic side of the membrane.

The protein belongs to the ArnF family. As to quaternary structure, heterodimer of ArnE and ArnF.

It is found in the cell inner membrane. It participates in bacterial outer membrane biogenesis; lipopolysaccharide biosynthesis. Functionally, translocates 4-amino-4-deoxy-L-arabinose-phosphoundecaprenol (alpha-L-Ara4N-phosphoundecaprenol) from the cytoplasmic to the periplasmic side of the inner membrane. The polypeptide is Probable 4-amino-4-deoxy-L-arabinose-phosphoundecaprenol flippase subunit ArnF (Salmonella choleraesuis (strain SC-B67)).